A 154-amino-acid polypeptide reads, in one-letter code: Large ribosomal subunit protein uL22 (154 aa).

It belongs to the universal ribosomal protein uL22 family. Part of the 50S ribosomal subunit.

Functionally, this protein binds specifically to 23S rRNA. It makes multiple contacts with different domains of the 23S rRNA in the assembled 50S subunit and ribosome. The globular domain of the protein is located near the polypeptide exit tunnel on the outside of the subunit, while an extended beta-hairpin is found that lines the wall of the exit tunnel in the center of the 70S ribosome. This is Large ribosomal subunit protein uL22 from Methanoregula boonei (strain DSM 21154 / JCM 14090 / 6A8).